Consider the following 89-residue polypeptide: Small ribosomal subunit protein uS15 (89 aa).

It belongs to the universal ribosomal protein uS15 family. As to quaternary structure, part of the 30S ribosomal subunit. Forms a bridge to the 50S subunit in the 70S ribosome, contacting the 23S rRNA.

Functionally, one of the primary rRNA binding proteins, it binds directly to 16S rRNA where it helps nucleate assembly of the platform of the 30S subunit by binding and bridging several RNA helices of the 16S rRNA. Forms an intersubunit bridge (bridge B4) with the 23S rRNA of the 50S subunit in the ribosome. The sequence is that of Small ribosomal subunit protein uS15 from Mycobacterium leprae (strain Br4923).